The primary structure comprises 74 residues: Small ribosomal subunit protein eS17 (74 aa).

The protein belongs to the eukaryotic ribosomal protein eS17 family.

The polypeptide is Small ribosomal subunit protein eS17 (Aeropyrum pernix (strain ATCC 700893 / DSM 11879 / JCM 9820 / NBRC 100138 / K1)).